A 145-amino-acid chain; its full sequence is Flagellar assembly factor FliW (145 aa).

This sequence belongs to the FliW family. In terms of assembly, interacts with translational regulator CsrA and flagellin(s).

It localises to the cytoplasm. Functionally, acts as an anti-CsrA protein, binds CsrA and prevents it from repressing translation of its target genes, one of which is flagellin. Binds to flagellin and participates in the assembly of the flagellum. This Thermosipho africanus (strain TCF52B) protein is Flagellar assembly factor FliW.